The following is an 881-amino-acid chain: Interference hedgehog (881 aa).

Positions 1 to 26 (MSSSSSSLLLMMLLLLLLLLTSKLEA) are cleaved as a signal peptide. Residues 27–693 (IPVLSSTSPS…NHNETYSLNP (667 aa)) lie on the Extracellular side of the membrane. Ig-like C2-type domains follow at residues 37 to 138 (PGVR…IARL), 128 to 228 (PLVV…IPSS), 242 to 330 (PYLL…YINV), and 336 to 425 (PVIV…LQVN). 3 disulfide bridges follow: Cys-60–Cys-122, Cys-167–Cys-212, and Cys-266–Cys-314. 9 N-linked (GlcNAc...) asparagine glycosylation sites follow: Asn-75, Asn-98, Asn-194, Asn-201, Asn-282, Asn-349, Asn-381, Asn-430, and Asn-455. Cys-358 and Cys-407 are oxidised to a cystine. 2 Fibronectin type-III domains span residues 450–558 (PPSA…LQRG) and 566–661 (VPEL…TQRS). 3 residues coordinate heparin: Arg-486, Lys-492, and Lys-494. N-linked (GlcNAc...) asparagine glycosylation occurs at Asn-517. Residue Arg-532 participates in heparin binding. Residue Asn-548 is glycosylated (N-linked (GlcNAc...) asparagine). The tract at residues 655–685 (QGRTQRSKLTTTEQPIQQKGGDRNVNTTPNH) is disordered. Residues 656-671 (GRTQRSKLTTTEQPIQ) are compositionally biased toward polar residues. The N-linked (GlcNAc...) asparagine glycan is linked to Asn-686. A helical transmembrane segment spans residues 694–714 (LLTGTIGGGALLLLLLIAFSF). The Cytoplasmic segment spans residues 715–881 (CLCRRKNRNG…SSGSLNSVGV (167 aa)). Disordered stretches follow at residues 768 to 791 (NPLDQQQQQPLDEKNTNTNLNSPH) and 809 to 881 (PTTY…SVGV). Residues 837 to 855 (PGSNNNLQQIGSETTTTGQ) show a composition bias toward polar residues. Low complexity predominate over residues 865–881 (SSRSENLSSGSLNSVGV).

Belongs to the immunoglobulin superfamily. IHOG family. As to quaternary structure, homodimer. Heterotetramer; 2 iHog chains bind 2 hh chains when facilitated by heparin, heparin is required to promote high-affinity interactions between hh and iHog.

The protein localises to the membrane. Its function is as follows. Mediates response to the active Hedgehog (Hh) protein signal in embryos, functioning upstream or at the level of patched (ptc). In Drosophila willistoni (Fruit fly), this protein is Interference hedgehog.